A 339-amino-acid chain; its full sequence is Outer membrane protein assembly factor BamC (339 aa).

Positions 1–19 (MKFSRQLVLGSLAVLVLSA) are cleaved as a signal peptide. Cys-20 carries the N-palmitoyl cysteine lipid modification. Cys-20 carries S-diacylglycerol cysteine lipidation.

The protein belongs to the BamC family. As to quaternary structure, part of the Bam complex.

It is found in the cell outer membrane. In terms of biological role, part of the outer membrane protein assembly complex, which is involved in assembly and insertion of beta-barrel proteins into the outer membrane. This Vibrio cholerae serotype O1 (strain ATCC 39315 / El Tor Inaba N16961) protein is Outer membrane protein assembly factor BamC.